The chain runs to 481 residues: ATP synthase subunit beta (481 aa).

An ATP-binding site is contributed by 167-174 (GGAGVGKT).

This sequence belongs to the ATPase alpha/beta chains family. F-type ATPases have 2 components, CF(1) - the catalytic core - and CF(0) - the membrane proton channel. CF(1) has five subunits: alpha(3), beta(3), gamma(1), delta(1), epsilon(1). CF(0) has three main subunits: a(1), b(2) and c(9-12). The alpha and beta chains form an alternating ring which encloses part of the gamma chain. CF(1) is attached to CF(0) by a central stalk formed by the gamma and epsilon chains, while a peripheral stalk is formed by the delta and b chains.

It localises to the cell membrane. The enzyme catalyses ATP + H2O + 4 H(+)(in) = ADP + phosphate + 5 H(+)(out). In terms of biological role, produces ATP from ADP in the presence of a proton gradient across the membrane. The catalytic sites are hosted primarily by the beta subunits. This Corynebacterium jeikeium (strain K411) protein is ATP synthase subunit beta.